Consider the following 244-residue polypeptide: Sensory transduction protein LytR (244 aa).

In terms of domain architecture, Response regulatory spans 2–118 (NILILDDEML…RVDKALAKVK (117 aa)). Residue D55 is modified to 4-aspartylphosphate. Positions 140-244 (LTLTLADRSI…MKELNAHLTL (105 aa)) constitute an HTH LytTR-type domain.

In terms of processing, phosphorylated by LytS.

The protein localises to the cytoplasm. Member of the two-component regulatory system LytR/LytS that probably regulates genes involved in cell wall metabolism. This Streptococcus mutans serotype c (strain ATCC 700610 / UA159) protein is Sensory transduction protein LytR (lytR).